A 201-amino-acid chain; its full sequence is MKYILIHDLPYQEEEIGITEFYDENDLDTEADIYDRETFGILLGEYVTGLYLLDDTFIEPVLDNINIPNNVYSTNIFAIHYVAKHILGIKDLDKRLKSGDIELVRELGEVTIGGKEKYFYSFATKYCSHHNPIAFPIYDSYVEQVLLYFNKVDKFSAFKRKDLKNYRKFKEVLIDFQRFNLKELDLYLWLLGKEIFPKSKN.

This is an uncharacterized protein from Haemophilus influenzae (strain ATCC 51907 / DSM 11121 / KW20 / Rd).